The primary structure comprises 265 residues: Undecaprenyl-diphosphatase (265 aa).

The next 8 helical transmembrane spans lie at 1-21, 39-59, 87-107, 110-130, 144-164, 187-207, 217-237, and 244-264; these read MDFLQSIILGIIQGITEFLPI, QGVGFDLAVHVGTLLAVILYF, WAVVVGTIPACIAGILLLDYI, ALRAVGVIITTTVVFAVLLAA, IGFKDAIIVGLAQAVALIPGT, FSFFMAIPITAAAALVKLLTI, LGFLVGGIVSFLTAITAIHFF, and FGMWPYVIYRLVLAVVLYLLF.

This sequence belongs to the UppP family.

It is found in the cell inner membrane. It catalyses the reaction di-trans,octa-cis-undecaprenyl diphosphate + H2O = di-trans,octa-cis-undecaprenyl phosphate + phosphate + H(+). Functionally, catalyzes the dephosphorylation of undecaprenyl diphosphate (UPP). Confers resistance to bacitracin. The protein is Undecaprenyl-diphosphatase of Idiomarina loihiensis (strain ATCC BAA-735 / DSM 15497 / L2-TR).